We begin with the raw amino-acid sequence, 336 residues long: UDP-N-acetylglucosamine--N-acetylmuramyl-(pentapeptide) pyrophosphoryl-undecaprenol N-acetylglucosamine transferase (336 aa).

4 residues coordinate UDP-N-acetyl-alpha-D-glucosamine: asparagine 102, arginine 144, serine 172, and glutamine 264.

The protein belongs to the glycosyltransferase 28 family. MurG subfamily.

It is found in the cell membrane. It carries out the reaction di-trans,octa-cis-undecaprenyl diphospho-N-acetyl-alpha-D-muramoyl-L-alanyl-D-glutamyl-meso-2,6-diaminopimeloyl-D-alanyl-D-alanine + UDP-N-acetyl-alpha-D-glucosamine = di-trans,octa-cis-undecaprenyl diphospho-[N-acetyl-alpha-D-glucosaminyl-(1-&gt;4)]-N-acetyl-alpha-D-muramoyl-L-alanyl-D-glutamyl-meso-2,6-diaminopimeloyl-D-alanyl-D-alanine + UDP + H(+). Its pathway is cell wall biogenesis; peptidoglycan biosynthesis. Functionally, cell wall formation. Catalyzes the transfer of a GlcNAc subunit on undecaprenyl-pyrophosphoryl-MurNAc-pentapeptide (lipid intermediate I) to form undecaprenyl-pyrophosphoryl-MurNAc-(pentapeptide)GlcNAc (lipid intermediate II). This Rubrobacter xylanophilus (strain DSM 9941 / JCM 11954 / NBRC 16129 / PRD-1) protein is UDP-N-acetylglucosamine--N-acetylmuramyl-(pentapeptide) pyrophosphoryl-undecaprenol N-acetylglucosamine transferase.